The primary structure comprises 417 residues: MITLTIFSPTDFQGLRGPLIIYDPEDPQKHLYDVDDESTIFQVGDSWHNSTVPLLAGYVATGIVPVSDSGTVDGAGRFQGGPAVPFAVTNVVKGQRYRLRIINQSARNVFTISIDKHFLTIIEADGVATQPLLVNEIEMLAGQRYSAIVSTPPQLSGSLALELINMAHSFTQTRPLINNAPFVSGDPSRNLNQNATLSRGILRYAGGRREDPRTPMTLGPDPTNPLAFVEANLKPLVNNPPGIPDVNITLNLVVTTGAAQWNVNNVSYLPPVVPTLVKILAGADEPANFNVTENTFLLPVNATIQITFPPMLMTKLTPSTYTEYVTIFLILLHPIDAFPKNNFWVVKSNSSDSDVINTIDPIKRDVTAVGAEGTIVRFTTDNIVMASGTDEVRTDVEPDAAWEGLCPAYDALPSALQ.

This sequence belongs to the multicopper oxidase family.

Laccase-like protein; part of the gene cluster that mediates the biosynthesis of clavilactone A, a meroterpenoid that features a unique benzo-fused ten-membered carbocyclic ring unit with an alpha,beta-epoxy-gamma-lactone moiety, forming an intriguing 10/5/3 tricyclic nested skeleton. ClaR, ClaS and ClaT are sufficient to produce clavilactone A and the function of claX, if any, has still to be identified. The biosynthesis begins with the prenyltransferase claS that transfers geranyl pyrophosphate (GPP) to hydroquinone to produces geranylhydroquinon. The cytochrome P450 monooxygenase claR then catalyzes the diradical coupling reaction between the intramolecular hydroquinone and allyl moieties to form the benzo-fused ten-membered carbocyclic ring unit of wigantol. Finally the cytochrome P450 monooxygenase claT exquisitely and stereoselectively assembles the alpha,beta-epoxy-gamma-lactone moiety, producing clavilactone A via arnebinol A. The polypeptide is Laccase-like protein claX (Ampulloclitocybe clavipes (Club foot)).